The following is a 197-amino-acid chain: Phospholipid hydroperoxide glutathione peroxidase (197 aa).

Phosphoserine is present on serine 40. The active site involves selenocysteine 73. A non-standard amino acid (selenocysteine) is located at residue selenocysteine 73.

Belongs to the glutathione peroxidase family. As to quaternary structure, monomer. Has a tendency to form higher mass oligomers. Interacts with FUNDC1; this interaction promotes GPX4 recruitment into mitochondria through TOM/TIM complex where it is degraded by mitophagy.

Its subcellular location is the mitochondrion. The protein localises to the cytoplasm. It carries out the reaction a hydroperoxy polyunsaturated fatty acid + 2 glutathione = a hydroxy polyunsaturated fatty acid + glutathione disulfide + H2O. It catalyses the reaction 2 glutathione + H2O2 = glutathione disulfide + 2 H2O. The enzyme catalyses tert-butyl hydroperoxide + 2 glutathione = tert-butanol + glutathione disulfide + H2O. The catalysed reaction is cumene hydroperoxide + 2 glutathione = 2-phenylpropan-2-ol + glutathione disulfide + H2O. It carries out the reaction (9S)-hydroperoxy-(10E,12Z)-octadecadienoate + 2 glutathione = (9S)-hydroxy-(10E,12Z)-octadecadienoate + glutathione disulfide + H2O. It catalyses the reaction (13S)-hydroperoxy-(9Z,11E)-octadecadienoate + 2 glutathione = (13S)-hydroxy-(9Z,11E)-octadecadienoate + glutathione disulfide + H2O. The enzyme catalyses (5S)-hydroperoxy-(6E,8Z,11Z,14Z)-eicosatetraenoate + 2 glutathione = (5S)-hydroxy-(6E,8Z,11Z,14Z)-eicosatetraenoate + glutathione disulfide + H2O. The catalysed reaction is (12R)-hydroperoxy-(5Z,8Z,10E,14Z)-eicosatetraenoate + 2 glutathione = (12R)-hydroxy-(5Z,8Z,10E,14Z)-eicosatetraenoate + glutathione disulfide + H2O. It carries out the reaction (12S)-hydroperoxy-(5Z,8Z,10E,14Z)-eicosatetraenoate + 2 glutathione = (12S)-hydroxy-(5Z,8Z,10E,14Z)-eicosatetraenoate + glutathione disulfide + H2O. It catalyses the reaction (15S)-hydroperoxy-(5Z,8Z,11Z,13E)-eicosatetraenoate + 2 glutathione = (15S)-hydroxy-(5Z,8Z,11Z,13E)-eicosatetraenoate + glutathione disulfide + H2O. The enzyme catalyses (5S)-hydroperoxy-(6E,8Z,11Z,14Z,17Z)-eicosapentaenoate + 2 glutathione = (5S)-hydroxy-(6E,8Z,11Z,14Z,17Z)-eicosapentaenoate + glutathione disulfide + H2O. The catalysed reaction is (12S)-hydroperoxy-(5Z,8Z,10E,14Z,17Z)-eicosapentaenoate + 2 glutathione = (12S)-hydroxy-(5Z,8Z,10E,14Z,17Z)-eicosapentaenoate + glutathione disulfide + H2O. It carries out the reaction (15S)-hydroperoxy-(5Z,8Z,11Z,13E,17Z)-eicosapentaenoate + 2 glutathione = (15S)-hydroxy-(5Z,8Z,11Z,13E,17Z)-eicosapentaenoate + glutathione disulfide + H2O. It catalyses the reaction (15S)-hydroperoxy-(11Z,13E)-eicosadienoate + 2 glutathione = (15S)-hydroxy-(11Z,13E)-eicosadienoate + glutathione disulfide + H2O. The enzyme catalyses (17S)-hydroperoxy-(4Z,7Z,10Z,13Z,15E,19Z)-docosahexaenoate + 2 glutathione = (17S)-hydroxy-(4Z,7Z,10Z,13Z,15E,19Z)-docosahexaenoate + glutathione disulfide + H2O. The catalysed reaction is a hydroperoxy-1,2-diacyl-glycero-3-phosphocholine + 2 glutathione = a hydroxy-1,2-diacyl-glycero-3-phosphocholine + glutathione disulfide + H2O. Its function is as follows. Essential antioxidant peroxidase that directly reduces phospholipid hydroperoxide even if they are incorporated in membranes and lipoproteins. Can also reduce fatty acid hydroperoxide, cholesterol hydroperoxide and thymine hydroperoxide. Plays a key role in protecting cells from oxidative damage by preventing membrane lipid peroxidation. Required to prevent cells from ferroptosis, a non-apoptotic cell death resulting from an iron-dependent accumulation of lipid reactive oxygen species. The presence of selenocysteine (Sec) versus Cys at the active site is essential for life: it provides resistance to overoxidation and prevents cells against ferroptosis. The presence of Sec at the active site is also essential for the survival of a specific type of parvalbumin-positive interneurons, thereby preventing against fatal epileptic seizures. May be required to protect cells from the toxicity of ingested lipid hydroperoxides. Required for normal sperm development and male fertility. Essential for maturation and survival of photoreceptor cells. Plays a role in a primary T-cell response to viral and parasitic infection by protecting T-cells from ferroptosis and by supporting T-cell expansion. Plays a role of glutathione peroxidase in platelets in the arachidonic acid metabolism. Reduces hydroperoxy ester lipids formed by a 15-lipoxygenase that may play a role as down-regulator of the cellular 15-lipoxygenase pathway. Can also reduce small soluble hydroperoxides such as H2O2, cumene hydroperoxide and tert-butyl hydroperoxide. This Sus scrofa (Pig) protein is Phospholipid hydroperoxide glutathione peroxidase.